The following is a 214-amino-acid chain: uncharacterized protein (214 aa).

A helical transmembrane segment spans residues 9 to 31 (FLYFAISVLVNLLFLKILYIYLF). The interval 53 to 74 (APPKKPGKPQKKVVKKKPEAVS) is disordered. Over residues 54–67 (PPKKPGKPQKKVVK) the composition is skewed to basic residues.

Its subcellular location is the membrane. This is an uncharacterized protein from Aquifex aeolicus (strain VF5).